Here is a 120-residue protein sequence, read N- to C-terminus: NADH dehydrogenase [ubiquinone] 1 subunit C2 (120 aa).

Residues 57 to 76 (GLHRQLLFVTSFVFAGYFYL) traverse the membrane as a helical segment.

Belongs to the complex I NDUFC2 subunit family. In terms of assembly, complex I is composed of 45 different subunits. Interacts with TMEM242.

It localises to the mitochondrion inner membrane. Functionally, accessory subunit of the mitochondrial membrane respiratory chain NADH dehydrogenase (Complex I), that is believed not to be involved in catalysis but required for the complex assembly. Complex I functions in the transfer of electrons from NADH to the respiratory chain. The immediate electron acceptor for the enzyme is believed to be ubiquinone. The protein is NADH dehydrogenase [ubiquinone] 1 subunit C2 of Mus musculus (Mouse).